The primary structure comprises 93 residues: UPF0358 protein BLi01701/BL02974 (93 aa).

This sequence belongs to the UPF0358 family.

The polypeptide is UPF0358 protein BLi01701/BL02974 (Bacillus licheniformis (strain ATCC 14580 / DSM 13 / JCM 2505 / CCUG 7422 / NBRC 12200 / NCIMB 9375 / NCTC 10341 / NRRL NRS-1264 / Gibson 46)).